The primary structure comprises 415 residues: Maltose excess protein 1, chloroplastic (415 aa).

Residues Ser74–Leu93 are disordered. The next 9 helical transmembrane spans lie at Ala139–Leu159, Leu176–Ile196, Phe199–Gly219, Asp231–Pro251, Leu252–Ile272, Phe286–Gln306, Ser322–Ile342, Leu345–Cys365, and Ser373–Trp393.

Expressed in leaves and roots. Expressed in root cap cells.

Its subcellular location is the plastid. It localises to the chloroplast inner membrane. Probable maltose transporter. Essential for the conversion of starch to sucrose in leaves at night, probably via the export of maltose from the chloroplast. Required for root cap cells formation. The polypeptide is Maltose excess protein 1, chloroplastic (MEX1) (Arabidopsis thaliana (Mouse-ear cress)).